The primary structure comprises 384 residues: S-adenosylmethionine synthase (384 aa).

ATP is bound at residue His-15. Asp-17 provides a ligand contact to Mg(2+). Residue Glu-43 participates in K(+) binding. Residues Glu-56 and Gln-99 each contribute to the L-methionine site. The interval 99 to 109 is flexible loop; sequence QSPDINQGVDR. ATP is bound by residues 164–166, 230–231, Asp-239, 245–246, Ala-262, and Lys-266; these read DAK, RF, and RK. Asp-239 contributes to the L-methionine binding site. Position 270 (Lys-270) interacts with L-methionine.

Belongs to the AdoMet synthase family. In terms of assembly, homotetramer; dimer of dimers. It depends on Mg(2+) as a cofactor. Requires K(+) as cofactor.

It localises to the cytoplasm. The catalysed reaction is L-methionine + ATP + H2O = S-adenosyl-L-methionine + phosphate + diphosphate. Its pathway is amino-acid biosynthesis; S-adenosyl-L-methionine biosynthesis; S-adenosyl-L-methionine from L-methionine: step 1/1. Catalyzes the formation of S-adenosylmethionine (AdoMet) from methionine and ATP. The overall synthetic reaction is composed of two sequential steps, AdoMet formation and the subsequent tripolyphosphate hydrolysis which occurs prior to release of AdoMet from the enzyme. This Erwinia tasmaniensis (strain DSM 17950 / CFBP 7177 / CIP 109463 / NCPPB 4357 / Et1/99) protein is S-adenosylmethionine synthase.